An 88-amino-acid chain; its full sequence is Alpha-latrotoxin-associated low molecular weight protein-2 (88 aa).

The signal sequence occupies residues 1 to 19 (MLKLICIAFLVTVLTLVAG). Glutamine 20 is subject to Pyrrolidone carboxylic acid. Cystine bridges form between cysteine 30–cysteine 66, cysteine 46–cysteine 62, and cysteine 49–cysteine 75.

It belongs to the arthropod CHH/MIH/GIH/VIH hormone family. Post-translationally, the N-terminus is blocked. Expressed by the venom gland.

The protein localises to the secreted. Its function is as follows. May increase the toxicity of alpha-latrotoxin and/or other venom components. Is non-toxic to mice and to the cockroach Periplaneta americana. The protein is Alpha-latrotoxin-associated low molecular weight protein-2 of Latrodectus tredecimguttatus (Mediterranean black widow spider).